The primary structure comprises 124 residues: Secreted RxLR effector protein 49 (124 aa).

An N-terminal signal peptide occupies residues 1–22 (MIRRSPLVAVILFVAITHVVLA). Residues 57-60 (RSLR) carry the RxLR motif.

The protein belongs to the RxLR effector family.

It is found in the secreted. The protein localises to the host cytoplasm. The protein resides in the host nucleus. Effector that acts as a broad suppressor of cell death to interrupt plant immunity. Inhibits cell death induced by cell death-inducing proteins, including the PAMP elicitor INF1 from P.infestans. The chain is Secreted RxLR effector protein 49 from Plasmopara viticola (Downy mildew of grapevine).